Here is a 112-residue protein sequence, read N- to C-terminus: ATP synthase subunit c (112 aa).

2 consecutive transmembrane segments (helical) span residues 36-56 (FSVL…AIGM) and 81-101 (MFIA…IALI).

The protein belongs to the ATPase C chain family. In terms of assembly, F-type ATPases have 2 components, F(1) - the catalytic core - and F(0) - the membrane proton channel. F(1) has five subunits: alpha(3), beta(3), gamma(1), delta(1), epsilon(1). F(0) has three main subunits: a(1), b(2) and c(10-14). The alpha and beta chains form an alternating ring which encloses part of the gamma chain. F(1) is attached to F(0) by a central stalk formed by the gamma and epsilon chains, while a peripheral stalk is formed by the delta and b chains.

Its subcellular location is the cell inner membrane. F(1)F(0) ATP synthase produces ATP from ADP in the presence of a proton or sodium gradient. F-type ATPases consist of two structural domains, F(1) containing the extramembraneous catalytic core and F(0) containing the membrane proton channel, linked together by a central stalk and a peripheral stalk. During catalysis, ATP synthesis in the catalytic domain of F(1) is coupled via a rotary mechanism of the central stalk subunits to proton translocation. Functionally, key component of the F(0) channel; it plays a direct role in translocation across the membrane. A homomeric c-ring of between 10-14 subunits forms the central stalk rotor element with the F(1) delta and epsilon subunits. This Campylobacter jejuni subsp. jejuni serotype O:6 (strain 81116 / NCTC 11828) protein is ATP synthase subunit c.